The following is a 344-amino-acid chain: Dihydroorotate dehydrogenase (quinone) (344 aa).

FMN contacts are provided by residues 65–69 and T89; that span reads AGLDK. Position 69 (K69) interacts with substrate. A substrate-binding site is contributed by 114–118; that stretch reads NRLGF. The FMN site is built by N145 and N178. Residue N178 coordinates substrate. The active-site Nucleophile is S181. N183 serves as a coordination point for substrate. Residues K223 and T251 each contribute to the FMN site. 252-253 serves as a coordination point for substrate; the sequence is NT. FMN contacts are provided by residues G274, G303, and 324 to 325; that span reads YT.

Belongs to the dihydroorotate dehydrogenase family. Type 2 subfamily. As to quaternary structure, monomer. FMN is required as a cofactor.

The protein resides in the cell membrane. It carries out the reaction (S)-dihydroorotate + a quinone = orotate + a quinol. The protein operates within pyrimidine metabolism; UMP biosynthesis via de novo pathway; orotate from (S)-dihydroorotate (quinone route): step 1/1. Functionally, catalyzes the conversion of dihydroorotate to orotate with quinone as electron acceptor. The polypeptide is Dihydroorotate dehydrogenase (quinone) (Methylibium petroleiphilum (strain ATCC BAA-1232 / LMG 22953 / PM1)).